We begin with the raw amino-acid sequence, 543 residues long: Probable protein kinase UbiB (543 aa).

The Protein kinase domain occupies 123–500 (DFDQQPLASA…HRRHAQARFL (378 aa)). ATP-binding positions include 129–137 (LASASVAQV) and K152. Catalysis depends on D286, which acts as the Proton acceptor. Transmembrane regions (helical) follow at residues 499 to 519 (FLLG…PTHE) and 521 to 541 (LASA…WKIS).

The protein belongs to the ABC1 family. UbiB subfamily.

It localises to the cell inner membrane. It participates in cofactor biosynthesis; ubiquinone biosynthesis [regulation]. Functionally, is probably a protein kinase regulator of UbiI activity which is involved in aerobic coenzyme Q (ubiquinone) biosynthesis. The chain is Probable protein kinase UbiB from Tolumonas auensis (strain DSM 9187 / NBRC 110442 / TA 4).